Consider the following 388-residue polypeptide: Palmitoyltransferase ZDHHC18-B (388 aa).

The interval 1 to 33 (MKNREYQQIDPQALATPTPTPPPRSLPEHKPRR) is disordered. The Cytoplasmic segment spans residues 1–58 (MKNREYQQIDPQALATPTPTPPPRSLPEHKPRRARRKWEVFPGKNRFYCDGRIIVARQ). The chain crosses the membrane as a helical span at residues 59-79 (SGVLPLTLGLILLTSGLFFIF). The Lumenal portion of the chain corresponds to 80–87 (DCPFLVKH). A helical membrane pass occupies residues 88 to 108 (LTSCIPAIGGVLFVFVIISLL). Residues 109–205 (QTSFTDPGIL…GNCVGKRNYR (97 aa)) lie on the Cytoplasmic side of the membrane. Positions 162–212 (KYCFTCKIFRPPRTSHCSLCDNCVERFDHHCPWVGNCVGKRNYRFFYTFIV) constitute a DHHC domain. The active-site S-palmitoyl cysteine intermediate is the Cys192. Residues 206–226 (FFYTFIVSLSFLTAFIFGCVT) form a helical membrane-spanning segment. Over 227 to 253 (THLALRSQGGNGLVNALQSSPASALEL) the chain is Lumenal. Residues 254–274 (VVCFFSVWSILGLSGFHTYLV) form a helical membrane-spanning segment. At 275 to 388 (AANLTTNEDI…AISMQNHSTA (114 aa)) the chain is on the cytoplasmic side.

This sequence belongs to the DHHC palmitoyltransferase family. ERF2/ZDHHC9 subfamily.

It is found in the golgi apparatus membrane. The enzyme catalyses L-cysteinyl-[protein] + hexadecanoyl-CoA = S-hexadecanoyl-L-cysteinyl-[protein] + CoA. Its function is as follows. Palmitoyltransferase that catalyzes the addition of palmitate onto various protein substrates, such as CGAS, HRAS and LCK. In Danio rerio (Zebrafish), this protein is Palmitoyltransferase ZDHHC18-B.